Reading from the N-terminus, the 670-residue chain is MPSATTASTNGANGASASPAPGNLSANDNIRRFAAPSRPLSPLPAHALFNDKTRCFVYGLQPRAVQGMLDFDFICKRSTPSVAGIIYTFGGQFVSKMYWGTSETLLPVYQEVPKAIAKHPDVDVVVNFASSRSVYSSTMELMEYPQIKTIAIIAEGVPERRAREIAYVAKKKGITIIGPATVGGIKPGCFKIGNTGGMMDNIVASKLYRKGSVGYVSKSGGMSNELNNIISQTTDGVYEGVAIGGDRYPGTTFIDHLLRYQADPDCKILVLLGEVGGVEEYKVIDAVKQGIITKPIVAWAIGTCASMFKTEVQFGHAGAFANSQLETAATKNKSMREAGFYVPDTFEDMPALLKQVYDKLVADGTIVPAPEPVVPKIPIDYSWAQELGLIRKPAAFISTISDDRGQELLYAGMPISDVFKEEIGIGGVMSLLWFRRRLPDYAAKFLEMVLMLTADHGPAVSGAMNTIITTRAGKDLISSLVAGLLTIGSRFGGALDGAAEEFTKAFDKGLSPREFVDTMRKQNKLIPGIGHRVKSRNNPDLRVELVKEYVKAKFPSTKLLDYALAVESVTTSKKDNLILNVDGCIAVCFVDLLRNCGAFSTEEAEDYLSMGVLNGLFVLGRSIGLIAHYLDQKRLRTGLYRHPWDDITYLLPSLQQPGPPGTEGRVEVQI.

Positions 1 to 22 (MPSATTASTNGANGASASPAPG) are disordered. ATP is bound by residues 257-277 (LLRY…EVGG) and 308-334 (FKTE…KNKS). Residue E274 participates in Mg(2+) binding. The active-site Tele-phosphohistidine intermediate is H316. 335–345 (MREAGFYVPDT) serves as a coordination point for CoA.

The protein belongs to the succinate/malate CoA ligase alpha subunit family. In terms of assembly, composed of two subunits.

Its subcellular location is the cytoplasm. The catalysed reaction is oxaloacetate + acetyl-CoA + ADP + phosphate = citrate + ATP + CoA. Its function is as follows. Catalyzes the formation of cytosolic acetyl-CoA, which is mainly used for the biosynthesis of fatty acids and sterols. The polypeptide is Probable ATP-citrate synthase subunit 1 (Neurospora crassa (strain ATCC 24698 / 74-OR23-1A / CBS 708.71 / DSM 1257 / FGSC 987)).